The following is a 392-amino-acid chain: Heat-inducible transcription repressor HrcA (392 aa).

Belongs to the HrcA family.

Functionally, negative regulator of class I heat shock genes (grpE-dnaK-dnaJ and groELS operons). Prevents heat-shock induction of these operons. In Chlamydia trachomatis serovar A (strain ATCC VR-571B / DSM 19440 / HAR-13), this protein is Heat-inducible transcription repressor HrcA.